Consider the following 601-residue polypeptide: Proline--tRNA ligase (601 aa).

Belongs to the class-II aminoacyl-tRNA synthetase family. ProS type 1 subfamily. In terms of assembly, homodimer.

It is found in the cytoplasm. It carries out the reaction tRNA(Pro) + L-proline + ATP = L-prolyl-tRNA(Pro) + AMP + diphosphate. In terms of biological role, catalyzes the attachment of proline to tRNA(Pro) in a two-step reaction: proline is first activated by ATP to form Pro-AMP and then transferred to the acceptor end of tRNA(Pro). As ProRS can inadvertently accommodate and process non-cognate amino acids such as alanine and cysteine, to avoid such errors it has two additional distinct editing activities against alanine. One activity is designated as 'pretransfer' editing and involves the tRNA(Pro)-independent hydrolysis of activated Ala-AMP. The other activity is designated 'posttransfer' editing and involves deacylation of mischarged Ala-tRNA(Pro). The misacylated Cys-tRNA(Pro) is not edited by ProRS. The sequence is that of Proline--tRNA ligase from Trichodesmium erythraeum (strain IMS101).